The following is a 330-amino-acid chain: Putative glycosyltransferase HI_0258 (330 aa).

A compositionally biased stretch (basic and acidic residues) spans 1–31; that stretch reads MTDRQTDRQTDRQTDRQTDRQTDRQTDRQTD. The tract at residues 1-32 is disordered; sequence MTDRQTDRQTDRQTDRQTDRQTDRQTDRQTDG. Residues 44–49 and 140–141 contribute to the UDP site; these read SSDHYY and DV. Mn(2+)-binding residues include aspartate 140, aspartate 142, and histidine 270. 270-276 serves as a coordination point for UDP; the sequence is HYCGPNK.

Belongs to the glycosyltransferase 8 family.

The protein is Putative glycosyltransferase HI_0258 of Haemophilus influenzae (strain ATCC 51907 / DSM 11121 / KW20 / Rd).